The following is a 3011-amino-acid chain: Genome polyprotein (3011 aa).

Position 2 is an N-acetylserine; by host (S2). Residues 2–23 (STNPKPQKKNKRNTNRRPQDVK) form an interaction with STAT1 region. The interaction with EIF2AK2/PKR stretch occupies residues 2-58 (STNPKPQKKNKRNTNRRPQDVKFPGGGQIVGGVYLLPRRGPRLGVRATRKTSERSQP). Residues 2 to 59 (STNPKPQKKNKRNTNRRPQDVKFPGGGQIVGGVYLLPRRGPRLGVRATRKTSERSQPR) form an interaction with DDX3X region. The disordered stretch occupies residues 2–75 (STNPKPQKKN…PKARRPEGRT (74 aa)). The Cytoplasmic segment spans residues 2-168 (STNPKPQKKN…EDGVNYATGN (167 aa)). 2 consecutive short sequence motifs (nuclear localization signal) follow at residues 5–13 (PKPQKKNKR) and 38–43 (PRRGPR). Over residues 7 to 16 (PQKKNKRNTN) the composition is skewed to basic residues. The segment covering 32-47 (GGVYLLPRRGPRLGVR) has biased composition (low complexity). S53 is subject to Phosphoserine; by host. Short sequence motifs (nuclear localization signal) lie at residues 58–64 (PRGRRQP) and 66–71 (PKARRP). Over residues 58 to 68 (PRGRRQPIPKA) the composition is skewed to basic residues. A Phosphoserine; by host modification is found at S99. Residues 112–152 (PRRRSRNLGKVIDTLTCGFADLMGYIPLVGAPLGGAARALA) are important for endoplasmic reticulum and mitochondrial localization. The residue at position 116 (S116) is a Phosphoserine; by host PKA. The segment at 122 to 173 (VIDTLTCGFADLMGYIPLVGAPLGGAARALAHGVRVLEDGVNYATGNLPGCS) is interaction with APOA2. The interval 164-167 (YATG) is important for lipid droplets localization. Residues 169–189 (LPGCSFSIFLLALLSCLTVPA) traverse the membrane as a helical segment. The propeptide at 178–191 (LLALLSCLTVPASA) is ER anchor for the core protein, removed in mature form by host signal peptidase. The Lumenal segment spans residues 190-358 (SAYQVRNSTG…AGAHWGVLAG (169 aa)). 3 N-linked (GlcNAc...) asparagine; by host glycosylation sites follow: N196, N209, and N234. Positions 265-296 (LVGSATLCSALYVGDLCGSVFLVGQLFTFSPR) are important for fusion. The N-linked (GlcNAc...) asparagine; by host glycan is linked to N305. The chain crosses the membrane as a helical span at residues 359–379 (IAYFSMVGNWAKVLVVLLLFA). At 380–725 (GVDAETHVTG…WEYVVLLFLL (346 aa)) the chain is on the lumenal side. The tract at residues 385-411 (THVTGGSAGHTVSGFVSLLAPGAKQNV) is HVR1. N-linked (GlcNAc...) (high mannose) asparagine; by host glycosylation is found at N417, N423, N430, and N448. Disulfide bonds link C429/C552, C452/C459, C486/C494, and C503/C508. Residues 474–480 (YANGSGP) are HVR2. The N-linked (GlcNAc...) asparagine; by host glycan is linked to N476. Residues 481–493 (DQRPYCWHYPPKP) are CD81-binding 1. N-linked (GlcNAc...) (high mannose) asparagine; by host glycosylation occurs at N532. Residues 543 to 551 (RPPLGNWFG) form a CD81-binding 2 region. The N-linked (GlcNAc...) (high mannose) asparagine; by host glycan is linked to N556. C564 and C569 are disulfide-bonded. Residue N576 is glycosylated (N-linked (GlcNAc...) (high mannose) asparagine; by host). 3 disulfides stabilise this stretch: C581–C585, C597–C620, and C607–C644. 2 N-linked (GlcNAc...) (high mannose) asparagine; by host glycosylation sites follow: N623 and N645. A disulfide bridge links C652 with C677. The segment at 660–671 (SELSPLLLTTTQ) is EIF2AK2/eIF2-alpha phosphorylation homology domain (PePHD). The helical transmembrane segment at 726-746 (LADARVCSCLWMMLLISQAEA) threads the bilayer. The Lumenal segment spans residues 747–757 (ALENLVILNAA). A helical transmembrane segment spans residues 758-778 (SLAGTHGLVSFLVFFCFAWYL). Residues 779–781 (KGK) are Cytoplasmic-facing. A helical transmembrane segment spans residues 782–803 (WVPGAVYTFYGMWPLLLLLLAL). The Lumenal portion of the chain corresponds to 804-813 (PQRAYALDTE). A helical transmembrane segment spans residues 814 to 834 (VAASCGGVVLVGLMALTLSPY). The Cytoplasmic portion of the chain corresponds to 835–838 (YKRY). A helical transmembrane segment spans residues 839–859 (ISWCLWWLQYFLTRVEAQLHV). At 860 to 881 (WIPPLNVRGGRDAVILLMCAVH) the chain is on the lumenal side. A helical transmembrane segment spans residues 882–902 (PTLVFDITKLLLAVFGPLWIL). The 128-residue stretch at 899–1026 (LWILQASLLK…GMVSKGWRLL (128 aa)) folds into the Peptidase C18 domain. The Cytoplasmic portion of the chain corresponds to 903–1657 (QASLLKVPYF…CMSADLEVVT (755 aa)). Residues 904-1206 (ASLLKVPYFV…PVENLETTMR (303 aa)) are protease NS2-3. A lipid anchor (S-palmitoyl cysteine; by host) is attached at C922. Positions 929–949 (IGGHYVQMVIIKLGALTGTYV) are interaction with host SCPS1. Active-site for protease NS2 activity; shared with dimeric partner residues include H952, E972, and C993. One can recognise a Peptidase S29 domain in the interval 1027–1208 (APITAYAQQT…ENLETTMRSP (182 aa)). Catalysis depends on charge relay system; for serine protease NS3 activity residues H1083 and D1107. Residues C1123 and C1125 each contribute to the Zn(2+) site. The active-site Charge relay system; for serine protease NS3 activity is S1165. The Zn(2+) site is built by C1171 and H1175. The Helicase ATP-binding domain occupies 1217-1369 (PVVPQSFQVA…PNIEEVALST (153 aa)). 1230-1237 (APTGSGKS) is a binding site for ATP. 2 residues coordinate Mg(2+): S1237 and E1317. Residues 1316-1319 (DECH) carry the DECH box motif. Positions 1486–1497 (QRRGRTGRGKPG) are RNA-binding. The chain crosses the membrane as a helical span at residues 1658-1678 (STWVLVGGVLAALAAYCLSTG). The NS3-binding stretch occupies residues 1679 to 1690 (CVVIVGRVVLSG). The Cytoplasmic segment spans residues 1679-1805 (CVVIVGRVVL…AVTSPLTTSQ (127 aa)). A helical membrane pass occupies residues 1806–1826 (TLLFNILGGWVAAQLAAPGAA). At 1827-1828 (TA) the chain is on the lumenal side. The helical transmembrane segment at 1829 to 1849 (FVGAGLAGAAIGSVGLGKVLI) threads the bilayer. The segment at 1833–1861 (GLAGAAIGSVGLGKVLIDILAGYGAGVAG) is glycine zipper. Residue D1850 is a topological domain, cytoplasmic. A helical transmembrane segment spans residues 1851–1871 (ILAGYGAGVAGALVAFKIMSG). Residues 1872–1881 (EVPSTEDLVN) are Lumenal-facing. A helical membrane pass occupies residues 1882–1902 (LLPAILSPGALVVGVVCAAIL). Over 1903-1972 (RRHVGPGEGA…WISSECTTPC (70 aa)) the chain is Cytoplasmic. 2 S-palmitoyl cysteine; by host lipidation sites follow: C1968 and C1972. An intramembrane segment occupies 1973–2003 (SGSWLRDIWDWICEVLSDFKTWLKAKLMPQL). Residues 1978-1998 (RDIWDWICEVLSDFKTWLKAK) form a membrane-binding region. Over 2004 to 2990 (PGIPFVSCQR…YHSVSHARPR (987 aa)) the chain is Cytoplasmic. The RNA-binding stretch occupies residues 2005 to 2221 (GIPFVSCQRG…KATCTANHDS (217 aa)). Residues C2011, C2029, C2031, and C2052 each coordinate Zn(2+). Residues 2120 to 2208 (EFFTELDGVR…ASSSASQLSA (89 aa)) are FKBP8-binding. Residues 2120–2332 (EFFTELDGVR…PVPPPRKKRT (213 aa)) are transcriptional activation. The interaction with non-structural protein 4A stretch occupies residues 2135-2139 (PPCKP). Positions 2189–2441 (RLARGSPPSV…TPCAAEEQKL (253 aa)) are interaction with host SKP2. Residue S2194 is modified to Phosphoserine; by host; in p56. Phosphoserine; by host; in p58 occurs at positions 2197, 2201, 2204, 2207, and 2210. Positions 2206–2245 (LSAPSLKATCTANHDSPDAELIEANLLWRQEMGGNITRVE) are ISDR. The segment at 2210 to 2275 (SLKATCTANH…REISVPAEIL (66 aa)) is EIF2AK2/PKR-binding. The tract at residues 2249-2306 (KVVILDSFDPLVAEEDEREISVPAEILRKSRRFAQALPVWARPDYNPPLVETWKKPDY) is NS4B-binding. 2 disordered regions span residues 2312 to 2334 (HGCP…RTVV) and 2351 to 2408 (SFGS…WSTV). Positions 2315–2326 (PLPPPKSPPVPP) are enriched in pro residues. S2321 bears the Phosphoserine; by host mark. An SH3-binding motif is present at residues 2322–2325 (PPVP). The Nuclear localization signal signature appears at 2326–2334 (PPRKKRTVV). An interaction with host IFI27 region spans residues 2332 to 2441 (TVVLTESTLS…TPCAAEEQKL (110 aa)). The span at 2351-2369 (SFGSSSTSGITGDNTTTSS) shows a compositional bias: low complexity. Positions 2354-2377 (SSSTSGITGDNTTTSSEPAPSGCP) are V3. Residues S2449 and S2462 each carry the phosphoserine; by host modification. The RdRp catalytic domain maps to 2634–2752 (PMGFSYDTRC…ICESAGVQED (119 aa)). Mg(2+)-binding residues include D2640, D2738, and D2739. A helical membrane pass occupies residues 2991-3011 (WIWFCLLLLAAGVGIYLLPNR).

Belongs to the hepacivirus polyprotein family. As to quaternary structure, homooligomer. Interacts with E1 (via C-terminus). Interacts with the non-structural protein 5A. Interacts (via N-terminus) with host STAT1 (via SH2 domain); this interaction results in decreased STAT1 phosphorylation and ubiquitin-mediated proteasome-dependent STAT1 degradation, leading to decreased IFN-stimulated gene transcription. Interacts with host STAT3; this interaction constitutively activates STAT3. Interacts with host LTBR receptor. Interacts with host TNFRSF1A receptor and possibly induces apoptosis. Interacts with host HNRPK. Interacts with host YWHAE. Interacts with host UBE3A/E6AP. Interacts with host DDX3X. Interacts with host APOA2. Interacts with host RXRA protein. Interacts with host SP110 isoform 3/Sp110b; this interaction sequesters the transcriptional corepressor SP110 away from the nucleus. Interacts with host CREB3 nuclear transcription protein; this interaction triggers cell transformation. Interacts with host ACY3. Interacts with host C1QR1. Interacts with host RBM24; this interaction, which enhances the interaction of the mature core protein with 5'-UTR, may inhibit viral translation and favor replication. Interacts with host EIF2AK2/PKR; this interaction induces the autophosphorylation of EIF2AK2. Part of the viral assembly initiation complex composed of NS2, E1, E2, NS3, NS4A, NS5A and the mature core protein. Forms a heterodimer with envelope glycoprotein E2. Interacts with mature core protein. Interacts with protease NS2. The heterodimer E1/E2 interacts with host CLDN1; this interaction plays a role in viral entry into host cell. Interacts with host SPSB2 (via C-terminus). Part of the viral assembly initiation complex composed of NS2, E1, E2, NS3, NS4A, NS5A and the mature core protein. Interacts with host NEURL3; this interaction prevents E1 binding to glycoprotein E2. In terms of assembly, forms a heterodimer with envelope glycoprotein E1. Interacts with host CD81 and SCARB1 receptors; these interactions play a role in viral entry into host cell. Interacts with host EIF2AK2/PKR; this interaction inhibits EIF2AK2 and probably allows the virus to evade the innate immune response. Interacts with host CD209/DC-SIGN and CLEC4M/DC-SIGNR. Interact with host SPCS1; this interaction is essential for viral particle assembly. Interacts with protease NS2. The heterodimer E1/E2 interacts with host CLDN1; this interaction plays a role in viral entry into host cell. Part of the viral assembly initiation complex composed of NS2, E1, E2, NS3, NS4A, NS5A and the mature core protein. Interacts with host SLC3A2/4F2hc; the interaction may facilitate viral entry into host cell. Interacts with human PLSCR1. As to quaternary structure, homohexamer. Homoheptamer. Interacts with protease NS2. Homodimer. Interacts with host SPCS1; this interaction is essential for viral particle assembly. Interacts with envelope glycoprotein E1. Interacts with envelope glycoprotein E2. Interacts with viroporin p7. Interacts with serine protease/helicase NS3. Part of the replication complex composed of NS2, NS3, NS4A, NS4B, NS5A and the RNA-directed RNA polymerase embedded in an ER-derived membranous web. Part of the viral assembly initiation complex composed of NS2, E1, E2, NS3, NS4A, NS5A and the mature core protein. In terms of assembly, interacts with protease NS2. Interacts with non-structural protein 4A; this interaction stabilizes the folding of NS3 serine protease. NS3-NS4A interaction is essential for NS3 activation and allows membrane anchorage of the latter. NS3/NS4A complex also prevents phosphorylation of host IRF3, thus preventing the establishment of dsRNA induced antiviral state. Interacts with host MAVS; this interaction leads to the cleavage and inhibition of host MAVS. Interacts with host TICAM1; this interaction leads to the cleavage and inhibition of host TICAM1. Interacts with host TANK-binding kinase/TBK1; this interaction results in the inhibition of the association between TBK1 and IRF3, which leads to the inhibition of IRF3 activation. Interacts with host RBM24. Part of the replication complex composed of NS2, NS3, NS4A, NS4B, NS5A and the RNA-directed RNA polymerase embedded in an ER-derived membranous web. Part of the viral assembly initiation complex composed of NS2, E1, E2, NS3, NS4A, NS5A and the mature core protein. As to quaternary structure, interacts with NS3 serine protease; this interaction stabilizes the folding of NS3 serine protease. NS3-NS4A interaction is essential for NS3 activation and allows membrane anchorage of the latter. Interacts with non-structural protein 5A (via N-terminus). Part of the replication complex composed of NS2, NS3, NS4A, NS4B, NS5A and the RNA-directed RNA polymerase embedded in an ER-derived membranous web. Part of the viral assembly initiation complex composed of NS2, E1, E2, NS3, NS4A, NS5A and the mature core protein. Homomultimer. Interacts with non-structural protein NS5A. Interacts with host PLA2G4C; this interaction likely initiates the recruitment of replication complexes to lipid droplets. Interacts with host STING; this interaction disrupts the interaction between STING and TBK1 thereby suppressing the interferon signaling. Part of the replication complex composed of NS2, NS3, NS4A, NS4B, NS5A and the RNA-directed RNA polymerase embedded in an ER-derived membranous web. In terms of assembly, monomer. Homodimer; dimerization is required for RNA-binding. Interacts with mature core protein. Interacts (via N-terminus) with non-structural protein 4A. Interacts with non-structural protein 4B. Interacts with RNA-directed RNA polymerase. Part of the viral assembly initiation complex composed of NS2, E1, E2, NS3, NS4A, NS5A and the mature core protein. Part of the replication complex composed of NS2, NS3, NS4A, NS4B, NS5A and the RNA-directed RNA polymerase. Interacts with host GRB2. Interacts with host BIN1. Interacts with host PIK3R1. Interacts with host SRCAP. Interacts with host FKBP8. Interacts with host VAPB. Interacts with host EIF2AK2/PKR; this interaction leads to disruption of EIF2AK2 dimerization by NS5A and probably allows the virus to evade the innate immune response. Interacts (via N-terminus) with host PACSIN2 (via N-terminus); this interaction attenuates protein kinase C alpha-mediated phosphorylation of PACSIN2 by disrupting the interaction between PACSIN2 and PRKCA. Interacts (via N-terminus) with host SRC kinase (via SH2 domain). Interacts with most Src-family kinases. Interacts with host IFI27 and SKP2; promotes the ubiquitin-mediated proteasomal degradation of NS5A. Interacts with host GPS2. Interacts with host TNFRSF21; this interaction allows the modulation by the virus of JNK, p38 MAPK, STAT3, and Akt signaling pathways in a DR6-dependent manner. Interacts (via N-terminus) with host CIDEB (via N-terminus); this interaction seems to regulate the association of HCV particles with APOE. Interacts with host CHKA/Choline Kinase-alpha; CHKA bridges host PI4KA and NS5A and potentiates NS5A-stimulated PI4KA activity, which then facilitates the targeting of the ternary complex to the ER for viral replication. Interacts with host SPSB2 (via C-terminus); this interaction targets NS5A for ubiquitination and degradation. Interacts with host RAB18; this interaction may promote the association of NS5A and other replicase components with lipid droplets. Interacts with host TRIM14; this interaction induces the degradation of NS5A. As to quaternary structure, homooligomer. Interacts with non-structural protein 5A. Interacts with host VAPB. Interacts with host PRK2/PKN2. Interacts with host HNRNPA1 and SEPT6; these interactions facilitate viral replication. Part of the replication complex composed of NS2, NS3, NS4A, NS4B, NS5A and the RNA-directed RNA polymerase. Initiates RNA transcription/replication at a flavin adenine dinucleotide (FAD), resulting in a 5'- FAD cap on viral RNAs. In this way, recognition of viral 5' RNA by host pattern recognition receptors can be bypassed, thereby evading activation of antiviral pathways. It depends on Zn(2+) as a cofactor. Requires Mg(2+) as cofactor. Post-translationally, specific enzymatic cleavages in vivo yield mature proteins. The structural proteins, core, E1, E2 and p7 are produced by proteolytic processing by host signal peptidases. The core protein precursor is synthesized as a 23 kDa protein which is retained in the ER membrane through the hydrophobic signal peptide. Cleavage by the signal peptidase releases the 21 kDa mature core protein. The cleavage of the core protein precursor occurs between aminoacids 176 and 188 but the exact cleavage site is not known. Some degraded forms of the core protein appear as well during the course of infection. The other proteins (p7, NS2, NS3, NS4A, NS4B, NS5A and NS5B) are cleaved by the viral proteases. Autoprocessing between NS2 and NS3 is mediated by the NS2 cysteine protease catalytic domain and regulated by the NS3 N-terminal domain. In terms of processing, phosphorylated by host PKC and PKA. Ubiquitinated; mediated by UBE3A and leading to core protein subsequent proteasomal degradation. Post-translationally, highly N-glycosylated. In terms of processing, palmitoylation is required for NS2/3 autoprocessing and E2 recruitment to membranes. Palmitoylated. This modification may play a role in its polymerization or in protein-protein interactions. Post-translationally, cleaved by host caspases which are probably activated by the viral infection. In terms of processing, ubiquitinated. Ubiquitination, most probably at Lys-2350, mediated by host IFI27 and SKP2 leads to proteasomal degradation, restricting viral infection. Phosphorylated on serines in a basal form termed p56. p58 is a hyperphosphorylated form of p56. p56 and p58 coexist in the cell in roughly equivalent amounts. Hyperphosphorylation is dependent on the presence of NS4A. Host CSNK1A1/CKI-alpha or RPS6KB1 kinases may be responsible for NS5A phosphorylation. Phosphorylated NS5A is involved in viral replication. Post-translationally, tyrosine phosphorylation is essential for the interaction with host SRC. In terms of processing, the N-terminus is phosphorylated by host PRK2/PKN2.

It localises to the host endoplasmic reticulum membrane. The protein resides in the host mitochondrion membrane. Its subcellular location is the virion. The protein localises to the host cytoplasm. It is found in the host nucleus. It localises to the host lipid droplet. The protein resides in the virion membrane. Its subcellular location is the host mitochondrion. The protein localises to the host cell membrane. It is found in the host perinuclear region. It carries out the reaction Hydrolysis of four peptide bonds in the viral precursor polyprotein, commonly with Asp or Glu in the P6 position, Cys or Thr in P1 and Ser or Ala in P1'.. The catalysed reaction is a ribonucleoside 5'-triphosphate + H2O = a ribonucleoside 5'-diphosphate + phosphate + H(+). It catalyses the reaction ATP + H2O = ADP + phosphate + H(+). The enzyme catalyses RNA(n) + a ribonucleoside 5'-triphosphate = RNA(n+1) + diphosphate. With respect to regulation, inhibited by the antiviral drug hexamethylene amiloride. Inhibition by amantadine appears to be genotype-dependent. Also inhibited by long-alkyl-chain iminosugar derivatives. Its activity is regulated as follows. Activity is up-regulated by PRK2/PKN2-mediated phosphorylation. Its function is as follows. Packages viral RNA to form a viral nucleocapsid, and promotes virion budding. Participates in the viral particle production as a result of its interaction with the non-structural protein 5A. Binds RNA and may function as a RNA chaperone to induce the RNA structural rearrangements taking place during virus replication. Modulates viral translation initiation by interacting with viral IRES and 40S ribosomal subunit. Affects various cell signaling pathways, host immunity and lipid metabolism. Prevents the establishment of cellular antiviral state by blocking the interferon-alpha/beta (IFN-alpha/beta) and IFN-gamma signaling pathways and by blocking the formation of phosphorylated STAT1 and promoting ubiquitin-mediated proteasome-dependent degradation of STAT1. Activates STAT3 leading to cellular transformation. Regulates the activity of cellular genes, including c-myc and c-fos. May repress the promoter of p53, and sequester CREB3 and SP110 isoform 3/Sp110b in the cytoplasm. Represses cell cycle negative regulating factor CDKN1A, thereby interrupting an important check point of normal cell cycle regulation. Targets transcription factors involved in the regulation of inflammatory responses and in the immune response: suppresses TNF-induced NF-kappa-B activation, and activates AP-1. Binds to dendritic cells (DCs) via C1QR1, resulting in down-regulation of T-lymphocytes proliferation. Alters lipid metabolism by interacting with hepatocellular proteins involved in lipid accumulation and storage. Induces up-regulation of FAS promoter activity, and thereby contributes to the increased triglyceride accumulation in hepatocytes (steatosis). Functionally, forms a heterodimer with envelope glycoprotein E2, which mediates virus attachment to the host cell, virion internalization through clathrin-dependent endocytosis and fusion with host membrane. Fusion with the host cell is most likely mediated by both E1 and E2, through conformational rearrangements of the heterodimer required for fusion rather than a classical class II fusion mechanism. E1/E2 heterodimer binds host apolipoproteins such as APOB and APOE thereby forming a lipo-viro-particle (LVP). APOE associated to the LVP allows the initial virus attachment to cell surface receptors such as the heparan sulfate proteoglycans (HSPGs), syndecan-1 (SDC1), syndecan-1 (SDC2), the low-density lipoprotein receptor (LDLR) and scavenger receptor class B type I (SCARB1). The cholesterol transfer activity of SCARB1 allows E2 exposure and binding of E2 to SCARB1 and the tetraspanin CD81. E1/E2 heterodimer binding on CD81 activates the epithelial growth factor receptor (EGFR) signaling pathway. Diffusion of the complex E1-E2-EGFR-SCARB1-CD81 to the cell lateral membrane allows further interaction with Claudin 1 (CLDN1) and occludin (OCLN) to finally trigger HCV entry. In terms of biological role, forms a heterodimer with envelope glycoprotein E1, which mediates virus attachment to the host cell, virion internalization through clathrin-dependent endocytosis and fusion with host membrane. Fusion with the host cell is most likely mediated by both E1 and E2, through conformational rearrangements of the heterodimer required for fusion rather than a classical class II fusion mechanism. The interaction between envelope glycoprotein E2 and host apolipoprotein E/APOE allows the proper assembly, maturation and infectivity of the viral particles. This interaction is probably promoted via the up-regulation of cellular autophagy by the virus. E1/E2 heterodimer binds host apolipoproteins such as APOB and APOE thereby forming a lipo-viro-particle (LVP). APOE associated to the LVP allows the initial virus attachment to cell surface receptors such as the heparan sulfate proteoglycans (HSPGs), syndecan-1 (SDC1), syndecan-1 (SDC2), the low-density lipoprotein receptor (LDLR) and scavenger receptor class B type I (SCARB1). The cholesterol transfer activity of SCARB1 allows E2 exposure and binding of E2 to SCARB1 and the tetraspanin CD81. E1/E2 heterodimer binding on CD81 activates the epithelial growth factor receptor (EGFR) signaling pathway. Diffusion of the complex E1-E2-EGFR-SCARB1-CD81 to the cell lateral membrane allows further interaction with Claudin 1 (CLDN1) and occludin (OCLN) to finally trigger HCV entry. Inhibits host EIF2AK2/PKR activation, preventing the establishment of an antiviral state. Viral ligand for CD209/DC-SIGN and CLEC4M/DC-SIGNR, which are respectively found on dendritic cells (DCs), and on liver sinusoidal endothelial cells and macrophage-like cells of lymph node sinuses. These interactions allow the capture of circulating HCV particles by these cells and subsequent facilitated transmission to permissive cells such as hepatocytes and lymphocyte subpopulations. The interaction between E2 and host amino acid transporter complex formed by SLC3A2 and SLC7A5/LAT1 may facilitate viral entry into host cell. Ion channel protein that acts as a viroporin and plays an essential role in the assembly, envelopment and secretion of viral particles. Regulates the host cell secretory pathway, which induces the intracellular retention of viral glycoproteins and favors assembly of viral particles. Creates a pore in acidic organelles and releases Ca(2+) and H(+) in the cytoplasm of infected cells, leading to a productive viral infection. High levels of cytoplasmic Ca(2+) may trigger membrane trafficking and transport of viral ER-associated proteins to viroplasms, sites of viral genome replication. This ionic imbalance induces the assembly of the inflammasome complex, which triggers the maturation of pro-IL-1beta into IL-1beta through the action of caspase-1. Targets also host mitochondria and induces mitochondrial depolarization. In addition of its role as a viroporin, acts as a lipid raft adhesion factor. Its function is as follows. Cysteine protease required for the proteolytic auto-cleavage between the non-structural proteins NS2 and NS3. The N-terminus of NS3 is required for the function of NS2 protease (active region NS2-3). Promotes the initiation of viral particle assembly by mediating the interaction between structural and non-structural proteins. Functionally, displays three enzymatic activities: serine protease with a chymotrypsin-like fold, NTPase and RNA helicase. NS3 serine protease, in association with NS4A, is responsible for the cleavages of NS3-NS4A, NS4A-NS4B, NS4B-NS5A and NS5A-NS5B. The NS3/NS4A complex prevents phosphorylation of host IRF3, thus preventing the establishment of dsRNA induced antiviral state. The NS3/NS4A complex induces host amino acid transporter component SLC3A2, thus contributing to HCV propagation. NS3 RNA helicase binds to RNA and unwinds both dsDNA and dsRNA in the 3' to 5' direction, and likely resolves RNA complicated stable secondary structures in the template strand. Binds a single ATP and catalyzes the unzipping of a single base pair of dsRNA. Inhibits host antiviral proteins TBK1 and IRF3 thereby preventing the establishment of an antiviral state. Cleaves host MAVS/CARDIF thereby preventing the establishment of an antiviral state. Cleaves host TICAM1/TRIF, thereby disrupting TLR3 signaling and preventing the establishment of an antiviral state. In terms of biological role, the NS3/NS4A complex prevents phosphorylation of host IRF3, thus preventing the establishment of dsRNA induced antiviral state. The NS3/NS4A complex induces host amino acid transporter component SLC3A2, thus contributing to HCV propagation. Induces a specific membrane alteration that serves as a scaffold for the virus replication complex. This membrane alteration gives rise to the so-called ER-derived membranous web that contains the replication complex. NS4B self-interaction contributes to its function in membranous web formation. Promotes host TRIF protein degradation in a CASP8-dependent manner thereby inhibiting host TLR3-mediated interferon signaling. Disrupts the interaction between STING and TBK1 contributing to the inhibition of interferon signaling. Its function is as follows. Phosphorylated protein that is indispensable for viral replication and assembly. Both hypo- and hyperphosphorylated states are required for the viral life cycle. The hyperphosphorylated form of NS5A is an inhibitor of viral replication. Involved in RNA-binding and especially in binding to the viral genome. Zinc is essential for RNA-binding. Participates in the viral particle production as a result of its interaction with the mature viral core protein. Its interaction with host VAPB may target the viral replication complex to vesicles. Down-regulates viral IRES translation initiation. Mediates interferon resistance, presumably by interacting with and inhibiting host EIF2AK2/PKR. Prevents BIN1-induced apoptosis. Acts as a transcriptional activator of some host genes important for viral replication when localized in the nucleus. Via the interaction with host PACSIN2, modulates lipid droplet formation in order to promote virion assembly. Modulates TNFRSF21/DR6 signaling pathway for viral propagation. Functionally, RNA-dependent RNA polymerase that performs primer-template recognition and RNA synthesis during viral replication. Initiates RNA transcription/replication at a flavin adenine dinucleotide (FAD), resulting in a 5'- FAD cap on viral RNAs. In this way, recognition of viral 5' RNA by host pattern recognition receptors can be bypassed, thereby evading activation of antiviral pathways. The polypeptide is Genome polyprotein (Homo sapiens (Human)).